Here is a 137-residue protein sequence, read N- to C-terminus: Small heat shock protein IbpA (137 aa).

Residues 28–137 (SQSNGGYPPY…AKKPRRIEIN (110 aa)) enclose the sHSP domain.

It belongs to the small heat shock protein (HSP20) family. As to quaternary structure, monomer. Forms homomultimers of about 100-150 subunits at optimal growth temperatures. Conformation changes to monomers at high temperatures or high ionic concentrations.

The protein resides in the cytoplasm. Its function is as follows. Associates with aggregated proteins, together with IbpB, to stabilize and protect them from irreversible denaturation and extensive proteolysis during heat shock and oxidative stress. Aggregated proteins bound to the IbpAB complex are more efficiently refolded and reactivated by the ATP-dependent chaperone systems ClpB and DnaK/DnaJ/GrpE. Its activity is ATP-independent. This is Small heat shock protein IbpA from Shigella sonnei (strain Ss046).